Consider the following 609-residue polypeptide: Spore-specific protein YSW1 (609 aa).

The disordered stretch occupies residues 1–24 (MSSLADTVEGSEAKRGRFSNNALT). Ser159 and Ser160 each carry phosphoserine. The disordered stretch occupies residues 162-225 (DENESHFTDA…DDEFSPATPP (64 aa)). A compositionally biased stretch (polar residues) spans 169–179 (TDANSHVMQSK). Residues 200 to 209 (LKKEYEKSFE) are compositionally biased toward basic and acidic residues. Residues 210–219 (EYSDDSDDEF) are compositionally biased toward acidic residues.

This chain is Spore-specific protein YSW1 (YSW1), found in Saccharomyces cerevisiae (strain ATCC 204508 / S288c) (Baker's yeast).